A 161-amino-acid chain; its full sequence is Cyclic pyranopterin monophosphate synthase (161 aa).

Substrate-binding positions include 75 to 77 and 113 to 114; these read LCH and ME. D128 is an active-site residue.

The protein belongs to the MoaC family. In terms of assembly, homohexamer; trimer of dimers.

The catalysed reaction is (8S)-3',8-cyclo-7,8-dihydroguanosine 5'-triphosphate = cyclic pyranopterin phosphate + diphosphate. The protein operates within cofactor biosynthesis; molybdopterin biosynthesis. Functionally, catalyzes the conversion of (8S)-3',8-cyclo-7,8-dihydroguanosine 5'-triphosphate to cyclic pyranopterin monophosphate (cPMP). This chain is Cyclic pyranopterin monophosphate synthase, found in Thioalkalivibrio sulfidiphilus (strain HL-EbGR7).